A 226-amino-acid chain; its full sequence is Cytidylate kinase (226 aa).

10–18 contacts ATP; the sequence is GPASSGKST.

Belongs to the cytidylate kinase family. Type 1 subfamily.

The protein localises to the cytoplasm. The enzyme catalyses CMP + ATP = CDP + ADP. It carries out the reaction dCMP + ATP = dCDP + ADP. This is Cytidylate kinase from Streptococcus pyogenes serotype M18 (strain MGAS8232).